The primary structure comprises 158 residues: Cyclic pyranopterin monophosphate synthase (158 aa).

Substrate is bound by residues 73-75 (LCH) and 110-111 (ME). Asp-125 is a catalytic residue.

This sequence belongs to the MoaC family. As to quaternary structure, homohexamer; trimer of dimers.

It catalyses the reaction (8S)-3',8-cyclo-7,8-dihydroguanosine 5'-triphosphate = cyclic pyranopterin phosphate + diphosphate. Its pathway is cofactor biosynthesis; molybdopterin biosynthesis. Functionally, catalyzes the conversion of (8S)-3',8-cyclo-7,8-dihydroguanosine 5'-triphosphate to cyclic pyranopterin monophosphate (cPMP). In Azotobacter vinelandii (strain DJ / ATCC BAA-1303), this protein is Cyclic pyranopterin monophosphate synthase.